Reading from the N-terminus, the 342-residue chain is Holliday junction branch migration complex subunit RuvB (342 aa).

Residues 1–179 form a large ATPase domain (RuvB-L) region; sequence MTNILSPEKI…FGIPMRLNFY (179 aa). Residues Ile-18, Arg-19, Gly-60, Lys-63, Thr-64, Thr-65, 126–128, Arg-169, Tyr-179, and Arg-216 contribute to the ATP site; that span reads EDF. Thr-64 provides a ligand contact to Mg(2+). Residues 180 to 250 form a small ATPAse domain (RuvB-S) region; that stretch reads NTEELKKVLN…ISDFGLNRLE (71 aa). The interval 253-342 is head domain (RuvB-H); sequence HIGLDSNDYR…HQFNIFNENE (90 aa). DNA is bound by residues Arg-289, Arg-308, and Arg-313.

It belongs to the RuvB family. In terms of assembly, homohexamer. Forms an RuvA(8)-RuvB(12)-Holliday junction (HJ) complex. HJ DNA is sandwiched between 2 RuvA tetramers; dsDNA enters through RuvA and exits via RuvB. An RuvB hexamer assembles on each DNA strand where it exits the tetramer. Each RuvB hexamer is contacted by two RuvA subunits (via domain III) on 2 adjacent RuvB subunits; this complex drives branch migration. In the full resolvosome a probable DNA-RuvA(4)-RuvB(12)-RuvC(2) complex forms which resolves the HJ.

It is found in the cytoplasm. It carries out the reaction ATP + H2O = ADP + phosphate + H(+). In terms of biological role, the RuvA-RuvB-RuvC complex processes Holliday junction (HJ) DNA during genetic recombination and DNA repair, while the RuvA-RuvB complex plays an important role in the rescue of blocked DNA replication forks via replication fork reversal (RFR). RuvA specifically binds to HJ cruciform DNA, conferring on it an open structure. The RuvB hexamer acts as an ATP-dependent pump, pulling dsDNA into and through the RuvAB complex. RuvB forms 2 homohexamers on either side of HJ DNA bound by 1 or 2 RuvA tetramers; 4 subunits per hexamer contact DNA at a time. Coordinated motions by a converter formed by DNA-disengaged RuvB subunits stimulates ATP hydrolysis and nucleotide exchange. Immobilization of the converter enables RuvB to convert the ATP-contained energy into a lever motion, pulling 2 nucleotides of DNA out of the RuvA tetramer per ATP hydrolyzed, thus driving DNA branch migration. The RuvB motors rotate together with the DNA substrate, which together with the progressing nucleotide cycle form the mechanistic basis for DNA recombination by continuous HJ branch migration. Branch migration allows RuvC to scan DNA until it finds its consensus sequence, where it cleaves and resolves cruciform DNA. The protein is Holliday junction branch migration complex subunit RuvB of Rickettsia felis (strain ATCC VR-1525 / URRWXCal2) (Rickettsia azadi).